The sequence spans 145 residues: MVDELVLLLHALLMRHRALSIENSQLMEQLRLLVCERASLLRQVRPPSCPVPFPETFNGESSRLPEFIVQTASYMLVNENRFCNDAMKVAFLISLLTGEAEEWVVPYIEMDSPILGDYRAFLDEMKQCFGWDDDEDDDDEEEDDY.

It belongs to the LDOC1 family. Interacts with NOD2.

It localises to the nucleus. May have an important role in the development and/or progression of some cancers. The polypeptide is Protein LDOC1 (LDOC1) (Gorilla gorilla gorilla (Western lowland gorilla)).